A 257-amino-acid chain; its full sequence is Isoprenyl transferase 1 (257 aa).

Asp37 is an active-site residue. Asp37 contributes to the Mg(2+) binding site. Substrate is bound by residues Gly38–Arg41, Trp42, His54, and Ser82–Asp84. Residue Asn85 is the Proton acceptor of the active site. Residues Phe86, Arg88, Arg206, and Arg212–Ser214 each bind substrate. Glu225 is a Mg(2+) binding site.

It belongs to the UPP synthase family. Homodimer. The cofactor is Mg(2+).

Functionally, catalyzes the condensation of isopentenyl diphosphate (IPP) with allylic pyrophosphates generating different type of terpenoids. This is Isoprenyl transferase 1 from Streptomyces avermitilis (strain ATCC 31267 / DSM 46492 / JCM 5070 / NBRC 14893 / NCIMB 12804 / NRRL 8165 / MA-4680).